Consider the following 526-residue polypeptide: Cytochrome P450 monooxygenase 58 (526 aa).

Helical transmembrane passes span 13 to 33, 115 to 135, and 306 to 326; these read IASS…LLLI, FIMA…GYGK, and IGAG…AMTL. Cys451 is a binding site for heme.

Belongs to the cytochrome P450 family. It depends on heme as a cofactor.

It is found in the membrane. Its pathway is secondary metabolite biosynthesis. Functionally, cytochrome P450 monooxygenase that is able to use delta(6)-protoilludene as a substrate to produce delta(6)-protoilludene-8-ol. In Postia placenta (strain ATCC 44394 / Madison 698-R) (Brown rot fungus), this protein is Cytochrome P450 monooxygenase 58.